The primary structure comprises 82 residues: Small ribosomal subunit protein bS16 (82 aa).

The protein belongs to the bacterial ribosomal protein bS16 family.

This is Small ribosomal subunit protein bS16 from Haemophilus influenzae (strain 86-028NP).